Reading from the N-terminus, the 127-residue chain is Small ribosomal subunit protein eS8 (127 aa).

Belongs to the eukaryotic ribosomal protein eS8 family. In terms of assembly, part of the 30S ribosomal subunit.

In Pyrococcus horikoshii (strain ATCC 700860 / DSM 12428 / JCM 9974 / NBRC 100139 / OT-3), this protein is Small ribosomal subunit protein eS8 (rps8e).